The chain runs to 349 residues: Farnesyl pyrophosphate synthase (349 aa).

Isopentenyl diphosphate-binding residues include Lys48, Arg51, and Gln90. Asp97 and Asp101 together coordinate Mg(2+). Arg106 lines the dimethylallyl diphosphate pocket. An isopentenyl diphosphate-binding site is contributed by Arg107. The dimethylallyl diphosphate site is built by Lys194, Thr195, Gln234, Lys251, and Lys260.

This sequence belongs to the FPP/GGPP synthase family. The cofactor is Mg(2+).

Its subcellular location is the cytoplasm. It catalyses the reaction isopentenyl diphosphate + dimethylallyl diphosphate = (2E)-geranyl diphosphate + diphosphate. It carries out the reaction isopentenyl diphosphate + (2E)-geranyl diphosphate = (2E,6E)-farnesyl diphosphate + diphosphate. The protein operates within isoprenoid biosynthesis; farnesyl diphosphate biosynthesis; farnesyl diphosphate from geranyl diphosphate and isopentenyl diphosphate: step 1/1. It participates in isoprenoid biosynthesis; geranyl diphosphate biosynthesis; geranyl diphosphate from dimethylallyl diphosphate and isopentenyl diphosphate: step 1/1. Functionally, catalyzes the sequential condensation of isopentenyl pyrophosphate with the allylic pyrophosphates, dimethylallyl pyrophosphate, and then with the resultant geranylpyrophosphate to the ultimate product farnesyl pyrophosphate. This Kluyveromyces lactis (strain ATCC 8585 / CBS 2359 / DSM 70799 / NBRC 1267 / NRRL Y-1140 / WM37) (Yeast) protein is Farnesyl pyrophosphate synthase (FPS1).